The following is a 357-amino-acid chain: Peptide chain release factor 1 (357 aa).

Glutamine 234 bears the N5-methylglutamine mark.

It belongs to the prokaryotic/mitochondrial release factor family. In terms of processing, methylated by PrmC. Methylation increases the termination efficiency of RF1.

The protein localises to the cytoplasm. Its function is as follows. Peptide chain release factor 1 directs the termination of translation in response to the peptide chain termination codons UAG and UAA. This Frankia casuarinae (strain DSM 45818 / CECT 9043 / HFP020203 / CcI3) protein is Peptide chain release factor 1.